Reading from the N-terminus, the 243-residue chain is Phosphoadenosine 5'-phosphosulfate reductase (243 aa).

Residue C239 is the Nucleophile; cysteine thiosulfonate intermediate of the active site.

This sequence belongs to the PAPS reductase family. CysH subfamily.

The protein resides in the cytoplasm. It carries out the reaction [thioredoxin]-disulfide + sulfite + adenosine 3',5'-bisphosphate + 2 H(+) = [thioredoxin]-dithiol + 3'-phosphoadenylyl sulfate. It participates in sulfur metabolism; hydrogen sulfide biosynthesis; sulfite from sulfate: step 3/3. In terms of biological role, catalyzes the formation of sulfite from phosphoadenosine 5'-phosphosulfate (PAPS) using thioredoxin as an electron donor. This chain is Phosphoadenosine 5'-phosphosulfate reductase, found in Proteus mirabilis (strain HI4320).